Here is a 607-residue protein sequence, read N- to C-terminus: Threonine--tRNA ligase (607 aa).

Residues 200–502 (DHRKLGRELG…LIEEYAGDFP (303 aa)) form a catalytic region. Positions 299, 350, and 479 each coordinate Zn(2+).

The protein belongs to the class-II aminoacyl-tRNA synthetase family. As to quaternary structure, homodimer. Requires Zn(2+) as cofactor.

The protein resides in the cytoplasm. The enzyme catalyses tRNA(Thr) + L-threonine + ATP = L-threonyl-tRNA(Thr) + AMP + diphosphate + H(+). In terms of biological role, catalyzes the attachment of threonine to tRNA(Thr) in a two-step reaction: L-threonine is first activated by ATP to form Thr-AMP and then transferred to the acceptor end of tRNA(Thr). Also edits incorrectly charged L-seryl-tRNA(Thr). This chain is Threonine--tRNA ligase, found in Synechococcus sp. (strain ATCC 27144 / PCC 6301 / SAUG 1402/1) (Anacystis nidulans).